A 285-amino-acid chain; its full sequence is Cytochrome c1 (285 aa).

An N-terminal signal peptide occupies residues 1 to 22; sequence MIRKLTLTAATALALSGGAAMA. C58, C61, H62, and M207 together coordinate heme c. A helical transmembrane segment spans residues 251 to 269; the sequence is AGFTAVMFLTVLSVLLYLT.

The main subunits of complex b-c1 are: cytochrome b, cytochrome c1 and the Rieske protein. Binds 1 heme c group covalently per subunit.

It is found in the cell membrane. In terms of biological role, component of the ubiquinol-cytochrome c reductase complex (complex III or cytochrome b-c1 complex), which is a respiratory chain that generates an electrochemical potential coupled to ATP synthesis. c1 functions as an electron donor to cytochrome c. The chain is Cytochrome c1 (petC) from Cereibacter sphaeroides (Rhodobacter sphaeroides).